The chain runs to 248 residues: 14-3-3 protein zeta (248 aa).

It belongs to the 14-3-3 family. Homodimer.

It is found in the cytoplasm. Its function is as follows. Adapter protein implicated in the regulation of a large spectrum of both general and specialized signaling pathways. Binds to a large number of partners, usually by recognition of a phosphoserine or phosphothreonine motif. Binding generally results in the modulation of the activity of the binding partner. This Aedes aegypti (Yellowfever mosquito) protein is 14-3-3 protein zeta (14-3-3zeta).